A 308-amino-acid polypeptide reads, in one-letter code: Aspartate carbamoyltransferase catalytic subunit (308 aa).

Carbamoyl phosphate contacts are provided by R57 and T58. K86 provides a ligand contact to L-aspartate. The carbamoyl phosphate site is built by R107, H135, and Q138. Positions 168 and 229 each coordinate L-aspartate. Carbamoyl phosphate is bound by residues L268 and P269.

It belongs to the aspartate/ornithine carbamoyltransferase superfamily. ATCase family. In terms of assembly, heterooligomer of catalytic and regulatory chains.

The enzyme catalyses carbamoyl phosphate + L-aspartate = N-carbamoyl-L-aspartate + phosphate + H(+). Its pathway is pyrimidine metabolism; UMP biosynthesis via de novo pathway; (S)-dihydroorotate from bicarbonate: step 2/3. Functionally, catalyzes the condensation of carbamoyl phosphate and aspartate to form carbamoyl aspartate and inorganic phosphate, the committed step in the de novo pyrimidine nucleotide biosynthesis pathway. The sequence is that of Aspartate carbamoyltransferase catalytic subunit from Pyrococcus abyssi (strain GE5 / Orsay).